The sequence spans 544 residues: Membrane protein insertase YidC (544 aa).

Positions threonine 29 to serine 58 are disordered. The span at serine 35–serine 46 shows a compositional bias: polar residues. Helical transmembrane passes span phenylalanine 341–isoleucine 361, glycine 421–leucine 441, and proline 499–valine 519.

This sequence belongs to the OXA1/ALB3/YidC family. Type 1 subfamily. In terms of assembly, interacts with the Sec translocase complex via SecD. Specifically interacts with transmembrane segments of nascent integral membrane proteins during membrane integration.

Its subcellular location is the cell inner membrane. Its function is as follows. Required for the insertion and/or proper folding and/or complex formation of integral membrane proteins into the membrane. Involved in integration of membrane proteins that insert both dependently and independently of the Sec translocase complex, as well as at least some lipoproteins. Aids folding of multispanning membrane proteins. This Pseudoalteromonas translucida (strain TAC 125) protein is Membrane protein insertase YidC.